Here is a 588-residue protein sequence, read N- to C-terminus: Sperm-associated microtubule inner protein 4 (588 aa).

Position 219 is a phosphothreonine (Thr219). Phosphoserine is present on residues Ser224, Ser406, Ser421, Ser427, and Ser437. Phosphotyrosine is present on Tyr441. Phosphoserine occurs at positions 457 and 484. Phosphothreonine is present on Thr512. At Ser516 the chain carries Phosphoserine. Lys543 participates in a covalent cross-link: Glycyl lysine isopeptide (Lys-Gly) (interchain with G-Cter in SUMO2). Ser545 is modified (phosphoserine).

The protein resides in the cytoplasm. Its subcellular location is the cytoskeleton. It is found in the microtubule organizing center. The protein localises to the centrosome. It localises to the flagellum axoneme. Functionally, microtubule inner protein (MIP) part of the dynein-decorated doublet microtubules (DMTs) in flagellum axoneme. May serve to reinforce and thus stabilize the microtubule structure in the sperm flagella. This is Sperm-associated microtubule inner protein 4 (Spmip4) from Rattus norvegicus (Rat).